Consider the following 109-residue polypeptide: Large ribosomal subunit protein uL22 (109 aa).

Belongs to the universal ribosomal protein uL22 family. In terms of assembly, part of the 50S ribosomal subunit.

This protein binds specifically to 23S rRNA; its binding is stimulated by other ribosomal proteins, e.g. L4, L17, and L20. It is important during the early stages of 50S assembly. It makes multiple contacts with different domains of the 23S rRNA in the assembled 50S subunit and ribosome. Functionally, the globular domain of the protein is located near the polypeptide exit tunnel on the outside of the subunit, while an extended beta-hairpin is found that lines the wall of the exit tunnel in the center of the 70S ribosome. In Methylobacillus flagellatus (strain ATCC 51484 / DSM 6875 / VKM B-1610 / KT), this protein is Large ribosomal subunit protein uL22.